The sequence spans 528 residues: Ecdysteroid UDP-glucosyltransferase (528 aa).

An N-terminal signal peptide occupies residues 1-32 (MGHLHIVHWRLTMNGAIAALFLCLVMVHQQHA).

The protein belongs to the UDP-glycosyltransferase family.

In terms of biological role, catalyzes the transfer of glucose from UDP-glucose to ecdysteroids which are insect molting hormones. Expression of egt interferes with normal insect development and block molting. This chain is Ecdysteroid UDP-glucosyltransferase (EGT), found in Mamestra brassicae nuclear polyhedrosis virus (MbNPV).